The chain runs to 209 residues: Protease (209 aa).

Residues His-55, Asp-72, and Cys-123 contribute to the active site.

This sequence belongs to the peptidase C5 family. As to quaternary structure, interacts with protease cofactor pVI-C; this interaction is necessary for protease activation.

Its subcellular location is the virion. The protein localises to the host nucleus. The catalysed reaction is Cleaves proteins of the adenovirus and its host cell at two consensus sites: -Yaa-Xaa-Gly-Gly-|-Xaa- and -Yaa-Xaa-Gly-Xaa-|-Gly- (in which Yaa is Met, Ile or Leu, and Xaa is any amino acid).. Requires DNA and protease cofactor for maximal activation. Inside nascent virions, becomes partially activated by binding to the viral DNA, allowing it to cleave the cofactor that binds to the protease and fully activates it. Actin, like the viral protease cofactor, seems to act as a cofactor in the cleavage of cytokeratin 18 and of actin itself. Its function is as follows. Cleaves viral precursor proteins (pTP, pIIIa, pVI, pVII, pVIII, and pX) inside newly assembled particles giving rise to mature virions. Protease complexed to its cofactor slides along the viral DNA to specifically locate and cleave the viral precursors. Mature virions have a weakened organization compared to the unmature virions, thereby facilitating subsequent uncoating. Without maturation, the particle lacks infectivity and is unable to uncoat. Late in adenovirus infection, in the cytoplasm, may participate in the cytoskeleton destruction. Cleaves host cell cytoskeletal keratins K7 and K18. In Human adenovirus D serotype 9 (HAdV-9), this protein is Protease.